A 108-amino-acid polypeptide reads, in one-letter code: UPF0060 membrane protein SH0717 (108 aa).

4 helical membrane-spanning segments follow: residues 5–25 (IFIF…IWLW), 31–51 (SSWL…IATF), 60–80 (VYAA…YIVD), and 86–106 (KYDL…ILPS).

This sequence belongs to the UPF0060 family.

The protein resides in the cell membrane. This Staphylococcus haemolyticus (strain JCSC1435) protein is UPF0060 membrane protein SH0717.